We begin with the raw amino-acid sequence, 482 residues long: Retinoic acid receptor beta (482 aa).

Positions 1 to 114 (MSTSSHACPV…PLPPPRVYKP (114 aa)) are modulating. A Phosphoserine modification is found at Ser-104. 2 NR C4-type zinc fingers span residues 115–135 (CFVCQDKSSGYHYGVSACEGC) and 151–175 (CHRDKNCVINKVTRNRCQYCRLQKC). Positions 115–180 (CFVCQDKSSG…RLQKCFEVGM (66 aa)) form a DNA-binding region, nuclear receptor. Residues 181–209 (SKESVRNDRNKKKKEPSKQECTESYEMTA) form a hinge region. Residues 210–444 (ELDDLTEKIR…PLIQEMLENS (235 aa)) enclose the NR LBD domain. The interval 443–482 (NSEGHEPLTPSSSGNIAEHSPSVSPSSVENSGVSQSPLLQ) is disordered. The span at 462-482 (SPSVSPSSVENSGVSQSPLLQ) shows a compositional bias: low complexity.

This sequence belongs to the nuclear hormone receptor family. NR1 subfamily. As to quaternary structure, homodimer. Heterodimer; with a RXR molecule. Binds DNA preferentially as a RAR/RXR heterodimer. Heterodimerizes (via NR LBD) with RXRA. Interacts weakly with NCOR2.

It localises to the nucleus. The protein resides in the cytoplasm. Functionally, receptor for retinoic acid. Retinoic acid receptors bind as heterodimers to their target response elements in response to their ligands, all-trans or 9-cis retinoic acid, and regulate gene expression in various biological processes. The RAR/RXR heterodimers bind to the retinoic acid response elements (RARE) composed of tandem 5'-AGGTCA-3' sites known as DR1-DR5. In the absence of ligand, acts mainly as an activator of gene expression due to weak binding to corepressors. The RXRA/RARB heterodimer can act as a repressor on the DR1 element and as an activator on the DR5 element. In concert with RARG, required for skeletal growth, matrix homeostasis and growth plate function. The protein is Retinoic acid receptor beta (Rarb) of Mus musculus (Mouse).